The following is a 795-amino-acid chain: Delta-1-pyrroline-5-carboxylate synthase (795 aa).

The interval 1 to 361 is glutamate 5-kinase; it reads MLSQVYRCGF…FFSEVKPAGP (361 aa). Residues serine 117, aspartate 223, and asparagine 246 each contribute to the substrate site. Residues 266 to 267 and 305 to 311 contribute to the ATP site; these read SD and MGGMEAK. An N6-succinyllysine mark is found at lysine 311, lysine 347, and lysine 550. A gamma-glutamyl phosphate reductase region spans residues 362 to 795; that stretch reads TVEQQGEMAR…NLPIPQRNTN (434 aa).

In the N-terminal section; belongs to the glutamate 5-kinase family. It in the C-terminal section; belongs to the gamma-glutamyl phosphate reductase family. Can form homodimers/multimers.

The protein resides in the mitochondrion. It localises to the mitochondrion matrix. It catalyses the reaction L-glutamate + ATP = L-glutamyl 5-phosphate + ADP. The enzyme catalyses L-glutamate 5-semialdehyde + phosphate + NADP(+) = L-glutamyl 5-phosphate + NADPH + H(+). It functions in the pathway amino-acid biosynthesis; L-proline biosynthesis; L-glutamate 5-semialdehyde from L-glutamate: step 1/2. It participates in amino-acid biosynthesis; L-proline biosynthesis; L-glutamate 5-semialdehyde from L-glutamate: step 2/2. With respect to regulation, isoform Short: Inhibited by L-ornithine with a Ki of approximately 0.25 mm. Isoform Long: Insensitive to ornithine inhibition. This is due to the two amino acid insert which abolishes feedback inhibition of P5CS activity by L-ornithine. Bifunctional enzyme that converts glutamate to glutamate 5-semialdehyde, an intermediate in the biosynthesis of proline, ornithine and arginine. The protein is Delta-1-pyrroline-5-carboxylate synthase (ALDH18A1) of Homo sapiens (Human).